A 402-amino-acid chain; its full sequence is Elongation factor Tu (402 aa).

The 196-residue stretch at 16–211 (KEHINIGTIG…AVDSYIDSPV (196 aa)) folds into the tr-type G domain. Positions 25 to 32 (GHVDHGKT) are G1. A GTP-binding site is contributed by 25-32 (GHVDHGKT). T32 is a binding site for Mg(2+). The tract at residues 66 to 70 (GITIN) is G2. The tract at residues 87–90 (DCPG) is G3. Residues 87–91 (DCPGH) and 142–145 (NKID) contribute to the GTP site. Residues 142–145 (NKID) are G4. Residues 181-183 (SAR) are G5.

Belongs to the TRAFAC class translation factor GTPase superfamily. Classic translation factor GTPase family. EF-Tu/EF-1A subfamily. As to quaternary structure, monomer.

Its subcellular location is the cytoplasm. The enzyme catalyses GTP + H2O = GDP + phosphate + H(+). In terms of biological role, GTP hydrolase that promotes the GTP-dependent binding of aminoacyl-tRNA to the A-site of ribosomes during protein biosynthesis. In Mesomycoplasma hyopneumoniae (strain 232) (Mycoplasma hyopneumoniae), this protein is Elongation factor Tu.